Consider the following 450-residue polypeptide: UDP-N-acetylmuramoylalanine--D-glutamate ligase (450 aa).

Position 119–125 (119–125) interacts with ATP; the sequence is GSNGKTT.

It belongs to the MurCDEF family.

Its subcellular location is the cytoplasm. The enzyme catalyses UDP-N-acetyl-alpha-D-muramoyl-L-alanine + D-glutamate + ATP = UDP-N-acetyl-alpha-D-muramoyl-L-alanyl-D-glutamate + ADP + phosphate + H(+). It functions in the pathway cell wall biogenesis; peptidoglycan biosynthesis. In terms of biological role, cell wall formation. Catalyzes the addition of glutamate to the nucleotide precursor UDP-N-acetylmuramoyl-L-alanine (UMA). This Bacillus cereus (strain Q1) protein is UDP-N-acetylmuramoylalanine--D-glutamate ligase.